Here is a 507-residue protein sequence, read N- to C-terminus: Maturase K (507 aa).

It belongs to the intron maturase 2 family. MatK subfamily.

It localises to the plastid. Its subcellular location is the chloroplast. In terms of biological role, usually encoded in the trnK tRNA gene intron. Probably assists in splicing its own and other chloroplast group II introns. The polypeptide is Maturase K (Browningia hertlingiana (Cactus)).